The following is a 472-amino-acid chain: Peptidoglycan endopeptidase RipA (472 aa).

Positions methionine 1–alanine 39 form a signal peptide, tat-type signal. The NlpC/P60 domain maps to arginine 340–tyrosine 472. Cysteine 383 (nucleophile) is an active-site residue. Histidine 432 serves as the catalytic Proton acceptor. Residue glutamate 444 is part of the active site.

The protein belongs to the peptidase C40 family. Monomer. Interacts with RpfB and PBP1A (ponA1) via residues 448-472 of RipA, interacts with RpfE. Interacts with the chaperone MoxR1. RipA-MoxR1 interaction in the cytoplasm leads to proper folding of RipA, resulting in its secretion. Also interacts with Mce2B. Exported by the Tat system. The position of the signal peptide cleavage has not been experimentally proven.

The protein resides in the secreted. Its activity is regulated as follows. MoxR1-mediated folding is critical for secretion via the TAT system. The synergistic effects on peptidoglycan degradation of RipA plus RpfB are inhibited by addition of PBP1A (ponA1). Peptidoglycan endopeptidase that cleaves the bond between D-glutamate and meso-diaminopimelate. Binds and degrades high-molecular weight peptidoglycan from a number of Actinobacteria; activity is increased in the presence of RpfB and inhibited by PBP1A (ponA1). Required for normal separation of daughter cells after cell division and for cell wall integrity. Required for host cell invasion and intracellular survival in host macrophages. This Mycobacterium tuberculosis (strain ATCC 25618 / H37Rv) protein is Peptidoglycan endopeptidase RipA (ripA).